A 439-amino-acid chain; its full sequence is Membrane sensor protein UhpC (439 aa).

At 1 to 25 (MLPFLKAPADAPLMTDKYEIDARYR) the chain is on the cytoplasmic side. A helical membrane pass occupies residues 26–45 (YWRRHILLTIWLGYALFYFT). Residues 46–66 (RKSFNAAVPEILANGVLSRSD) are Periplasmic-facing. The helical transmembrane segment at 67–87 (IGLLATLFYITYGVSKFVSGI) threads the bilayer. The Cytoplasmic portion of the chain corresponds to 88 to 95 (VSDRSNAR). A helical transmembrane segment spans residues 96 to 118 (YFMGIGLIATGIINILFGFSTSL). Residues 119–121 (WAF) are Periplasmic-facing. Residues 122-144 (AVLWVLNAFFQGWGSPVCARLLT) form a helical membrane-spanning segment. Over 145-162 (AWYSRTERGGWWALWNTA) the chain is Cytoplasmic. A helical membrane pass occupies residues 163 to 183 (HNVGGALIPIVMAAAALHYGW). Arginine 184 is a topological domain (periplasmic). Residues 185 to 205 (AGMMIAGCMAIVVGIFLCWRL) form a helical membrane-spanning segment. Residues 206-244 (RDRPQALGLPAVGEWRHDALEIAQQQEGAGLTRKEILTK) lie on the Cytoplasmic side of the membrane. The chain crosses the membrane as a helical span at residues 245–265 (YVLLNPYIWLLSFCYVLVYVV). The Periplasmic segment spans residues 266–289 (RAAINDWGNLYMSETLGVDLVTAN). Residues 290–310 (TAVTMFELGGFIGALVAGWGS) form a helical membrane-spanning segment. At 311–322 (DKLFNGNRGPMN) the chain is on the cytoplasmic side. The helical transmembrane segment at 323–343 (LIFAAGILLSVGSLWLMPFAS) threads the bilayer. Residues 344-349 (YVMQAT) are Periplasmic-facing. A helical membrane pass occupies residues 350-370 (CFFTIGFFVFGPQMLIGMAAA). The Cytoplasmic portion of the chain corresponds to 371 to 379 (ECSHKEAAG). Residues 380 to 400 (AATGFVGLFAYLGASLAGWPL) traverse the membrane as a helical segment. Over 401–410 (AKVLDTWHWS) the chain is Periplasmic. The helical transmembrane segment at 411–431 (GFFVVISIAAGISALLLLPFL) threads the bilayer. Topologically, residues 432-439 (NAQTPREA) are cytoplasmic.

This sequence belongs to the major facilitator superfamily. Organophosphate:Pi antiporter (OPA) (TC 2.A.1.4) family.

The protein resides in the cell inner membrane. Part of the UhpABC signaling cascade that controls the expression of the hexose phosphate transporter UhpT. UhpC senses external glucose-6-phosphate and interacts with the histidine kinase UhpB, leading to the stimulation of the autokinase activity of UhpB. This chain is Membrane sensor protein UhpC, found in Escherichia coli (strain K12).